Here is a 371-residue protein sequence, read N- to C-terminus: Hsc70-interacting protein (371 aa).

The segment at Met-38–Leu-80 is disordered. Over residues Ala-49–Glu-72 the composition is skewed to basic and acidic residues. TPR repeat units lie at residues Ala-113–Leu-146, Ala-147–Ser-180, and Ala-181–Glu-214. The segment covering Lys-255–Arg-271 has biased composition (basic and acidic residues). The disordered stretch occupies residues Lys-255 to Met-296. Residues Phe-280 to Met-296 show a composition bias toward gly residues. Positions Asp-321–Ile-360 constitute an STI1 domain. A Phosphoserine; by GRK5 modification is found at Ser-348. 2 positions are modified to N6-acetyllysine: Lys-355 and Lys-362.

This sequence belongs to the FAM10 family. In terms of assembly, homotetramer. Interacts with HSC70 as well as DNAJ homologs and HSP90. Interacts (via the C-terminus 302- 318 AA) with GRK5.

The protein localises to the cytoplasm. In terms of biological role, one HIP oligomer binds the ATPase domains of at least two HSC70 molecules dependent on activation of the HSC70 ATPase by HSP40. Stabilizes the ADP state of HSC70 that has a high affinity for substrate protein. Through its own chaperone activity, it may contribute to the interaction of HSC70 with various target proteins. The protein is Hsc70-interacting protein (St13) of Mus musculus (Mouse).